Here is a 302-residue protein sequence, read N- to C-terminus: Sulfate adenylyltransferase subunit 2 (302 aa).

The protein belongs to the PAPS reductase family. CysD subfamily. In terms of assembly, heterodimer composed of CysD, the smaller subunit, and CysN.

It catalyses the reaction sulfate + ATP + H(+) = adenosine 5'-phosphosulfate + diphosphate. It participates in sulfur metabolism; hydrogen sulfide biosynthesis; sulfite from sulfate: step 1/3. Functionally, with CysN forms the ATP sulfurylase (ATPS) that catalyzes the adenylation of sulfate producing adenosine 5'-phosphosulfate (APS) and diphosphate, the first enzymatic step in sulfur assimilation pathway. APS synthesis involves the formation of a high-energy phosphoric-sulfuric acid anhydride bond driven by GTP hydrolysis by CysN coupled to ATP hydrolysis by CysD. The protein is Sulfate adenylyltransferase subunit 2 of Yersinia pestis bv. Antiqua (strain Nepal516).